The following is a 137-amino-acid chain: NADH-quinone oxidoreductase subunit A (137 aa).

The next 3 membrane-spanning stretches (helical) occupy residues 12 to 32 (WGFA…LGLS), 66 to 86 (FYLV…LFAW), and 95 to 115 (WTGF…LVYL).

Belongs to the complex I subunit 3 family. As to quaternary structure, NDH-1 is composed of 13 different subunits. Subunits NuoA, H, J, K, L, M, N constitute the membrane sector of the complex.

The protein localises to the cell inner membrane. It catalyses the reaction a quinone + NADH + 5 H(+)(in) = a quinol + NAD(+) + 4 H(+)(out). NDH-1 shuttles electrons from NADH, via FMN and iron-sulfur (Fe-S) centers, to quinones in the respiratory chain. The immediate electron acceptor for the enzyme in this species is believed to be ubiquinone. Couples the redox reaction to proton translocation (for every two electrons transferred, four hydrogen ions are translocated across the cytoplasmic membrane), and thus conserves the redox energy in a proton gradient. The protein is NADH-quinone oxidoreductase subunit A of Pseudomonas putida (strain ATCC 700007 / DSM 6899 / JCM 31910 / BCRC 17059 / LMG 24140 / F1).